The chain runs to 377 residues: Probable glucokinase 2 (377 aa).

27–32 (CDVGGS) contacts ATP.

It belongs to the bacterial glucokinase family.

The catalysed reaction is D-glucose + ATP = D-glucose 6-phosphate + ADP + H(+). This is Probable glucokinase 2 (GK2) from Trichomonas vaginalis.